The following is a 111-amino-acid chain: Nucleoid-associated protein PSEEN1789 (111 aa).

Disordered regions lie at residues 1–25 (MMKG…KMQE) and 89–111 (NSQD…KMPF).

Belongs to the YbaB/EbfC family. Homodimer.

The protein localises to the cytoplasm. Its subcellular location is the nucleoid. Binds to DNA and alters its conformation. May be involved in regulation of gene expression, nucleoid organization and DNA protection. This is Nucleoid-associated protein PSEEN1789 from Pseudomonas entomophila (strain L48).